Here is a 185-residue protein sequence, read N- to C-terminus: Ribosome-recycling factor (185 aa).

This sequence belongs to the RRF family.

The protein resides in the cytoplasm. Responsible for the release of ribosomes from messenger RNA at the termination of protein biosynthesis. May increase the efficiency of translation by recycling ribosomes from one round of translation to another. This chain is Ribosome-recycling factor, found in Geobacter sulfurreducens (strain ATCC 51573 / DSM 12127 / PCA).